Here is a 509-residue protein sequence, read N- to C-terminus: Membrane-bound lytic murein transglycosylase F (509 aa).

The N-terminal stretch at 1 to 40 is a signal peptide; the sequence is MLASACTHSWRTGRFLNRIIKSSVQTLTAAALIANLSACS. The interval 41–280 is non-LT domain; the sequence is RPTTLEKIEQ…YLQERYFGHV (240 aa). The interval 281-509 is LT domain; sequence NQLNYVGART…APFRVTPPML (229 aa). Glutamate 327 is a catalytic residue. Residues 474 to 500 are disordered; sequence DGSVAQNEDAPTTGADGTTEETPAIPA.

The protein in the N-terminal section; belongs to the bacterial solute-binding protein 3 family. It in the C-terminal section; belongs to the transglycosylase Slt family.

Its subcellular location is the cell outer membrane. It catalyses the reaction Exolytic cleavage of the (1-&gt;4)-beta-glycosidic linkage between N-acetylmuramic acid (MurNAc) and N-acetylglucosamine (GlcNAc) residues in peptidoglycan, from either the reducing or the non-reducing ends of the peptidoglycan chains, with concomitant formation of a 1,6-anhydrobond in the MurNAc residue.. Functionally, murein-degrading enzyme that degrades murein glycan strands and insoluble, high-molecular weight murein sacculi, with the concomitant formation of a 1,6-anhydromuramoyl product. Lytic transglycosylases (LTs) play an integral role in the metabolism of the peptidoglycan (PG) sacculus. Their lytic action creates space within the PG sacculus to allow for its expansion as well as for the insertion of various structures such as secretion systems and flagella. The chain is Membrane-bound lytic murein transglycosylase F from Hahella chejuensis (strain KCTC 2396).